The following is a 275-amino-acid chain: 3-methyl-2-oxobutanoate hydroxymethyltransferase (275 aa).

Mg(2+) contacts are provided by Asp-51 and Asp-90. 3-methyl-2-oxobutanoate contacts are provided by residues 51–52, Asp-90, and Lys-120; that span reads DS. Glu-122 contacts Mg(2+). Glu-189 serves as the catalytic Proton acceptor.

The protein belongs to the PanB family. In terms of assembly, homodecamer; pentamer of dimers. Mg(2+) is required as a cofactor.

It localises to the cytoplasm. It carries out the reaction 3-methyl-2-oxobutanoate + (6R)-5,10-methylene-5,6,7,8-tetrahydrofolate + H2O = 2-dehydropantoate + (6S)-5,6,7,8-tetrahydrofolate. The protein operates within cofactor biosynthesis; (R)-pantothenate biosynthesis; (R)-pantoate from 3-methyl-2-oxobutanoate: step 1/2. Catalyzes the reversible reaction in which hydroxymethyl group from 5,10-methylenetetrahydrofolate is transferred onto alpha-ketoisovalerate to form ketopantoate. The sequence is that of 3-methyl-2-oxobutanoate hydroxymethyltransferase from Caulobacter vibrioides (strain ATCC 19089 / CIP 103742 / CB 15) (Caulobacter crescentus).